The sequence spans 305 residues: Small ribosomal subunit protein bS1B (305 aa).

S1 motif domains lie at 29 to 98 (GQTV…LSRR), 116 to 180 (GKTL…LTQR), and 194 to 262 (GNIY…LSTR).

It belongs to the bacterial ribosomal protein bS1 family.

Binds mRNA. In Synechocystis sp. (strain ATCC 27184 / PCC 6803 / Kazusa), this protein is Small ribosomal subunit protein bS1B (rps1b).